The sequence spans 237 residues: MVTHGKKYQDAIKLLDQSVAYAPAEAIDLAKKMSAAKFDETVEMHLKMGLDPKNATQQLRGVAVLPHGLGKTVRVLVFAQGEAEKAAQVAGADVYGGDELIKKIEAGFLDFDVAISTPDMMSKVGKLGKVLGRRGLMPNPKSGTVVPAEDFKKVIEEARKGRVEFKLDRSGIVHIILGKASFEGQMLLENMTSVVDAIIRSKPTGAKGQYIKSAYLATTMGPGVRLDLRAVSAMGGV.

The protein belongs to the universal ribosomal protein uL1 family. As to quaternary structure, part of the 50S ribosomal subunit.

In terms of biological role, binds directly to 23S rRNA. The L1 stalk is quite mobile in the ribosome, and is involved in E site tRNA release. Functionally, protein L1 is also a translational repressor protein, it controls the translation of the L11 operon by binding to its mRNA. This Dehalococcoides mccartyi (strain CBDB1) protein is Large ribosomal subunit protein uL1.